A 131-amino-acid chain; its full sequence is UPF0102 protein YraN (131 aa).

Polar residues predominate over residues 1 to 19 (MATVPTRSGSPRQLTTKQT). The disordered stretch occupies residues 1 to 20 (MATVPTRSGSPRQLTTKQTG).

It belongs to the UPF0102 family.

This Escherichia coli O8 (strain IAI1) protein is UPF0102 protein YraN.